The primary structure comprises 942 residues: DNA mismatch repair protein MutS (942 aa).

An ATP-binding site is contributed by 613–620 (GPNMAGKS).

It belongs to the DNA mismatch repair MutS family.

In terms of biological role, this protein is involved in the repair of mismatches in DNA. It is possible that it carries out the mismatch recognition step. This protein has a weak ATPase activity. The sequence is that of DNA mismatch repair protein MutS from Clostridium botulinum (strain Eklund 17B / Type B).